Reading from the N-terminus, the 121-residue chain is MVRATGSVASRRRRKRVLKQAKGFWGDRKGHFRQSRSSVMRAMAFNYMHRKDRKGDFRSLWIARLNVASRINGLSYSRLINGLKCAGIDLNRKMLSEMAIHNPMGFAEVANQAKKALEATI.

This sequence belongs to the bacterial ribosomal protein bL20 family.

In terms of biological role, binds directly to 23S ribosomal RNA and is necessary for the in vitro assembly process of the 50S ribosomal subunit. It is not involved in the protein synthesizing functions of that subunit. This Chlamydia caviae (strain ATCC VR-813 / DSM 19441 / 03DC25 / GPIC) (Chlamydophila caviae) protein is Large ribosomal subunit protein bL20.